The following is a 262-amino-acid chain: Sepiapterin reductase (262 aa).

N-acetylmethionine is present on M1. Residues G15–G21 and R43–S44 each bind NADP(+). S46 is modified (phosphoserine). D70–L71 lines the NADP(+) pocket. Residues S158 to L159 and Y171 each bind substrate. K175 contacts NADP(+). Residue S196 is modified to Phosphoserine. G200 provides a ligand contact to substrate. L202–Q207 contributes to the NADP(+) binding site. S214 carries the phosphoserine modification. D258 lines the substrate pocket.

The protein belongs to the sepiapterin reductase family. As to quaternary structure, homodimer.

The protein localises to the cytoplasm. It carries out the reaction L-erythro-7,8-dihydrobiopterin + NADP(+) = L-sepiapterin + NADPH + H(+). The enzyme catalyses (6R)-L-erythro-5,6,7,8-tetrahydrobiopterin + 2 NADP(+) = 6-pyruvoyl-5,6,7,8-tetrahydropterin + 2 NADPH + 2 H(+). It catalyses the reaction (S)-benzoin + NADP(+) = benzil + NADPH + H(+). Functionally, catalyzes the final one or two reductions in tetra-hydrobiopterin biosynthesis to form 5,6,7,8-tetrahydrobiopterin. The enzyme also catalyzes the reduction of benzil to (S)-benzoin. This is Sepiapterin reductase (SPR) from Meriones unguiculatus (Mongolian jird).